Here is a 314-residue protein sequence, read N- to C-terminus: D-alanine--D-alanine ligase (314 aa).

Residues 112 to 307 (KQVWQSLGLP…FQQLVLSILD (196 aa)) form the ATP-grasp domain. Position 138 to 193 (138 to 193 (AQMLGFPLIVKPAHEGSSIGMAKVGDVAELIAAWRAASAYDAQVLVEQWIQGPEFT)) interacts with ATP. The Mg(2+) site is built by Asp-261, Glu-274, and Asn-276.

The protein belongs to the D-alanine--D-alanine ligase family. Mg(2+) serves as cofactor. The cofactor is Mn(2+).

The protein resides in the cytoplasm. It catalyses the reaction 2 D-alanine + ATP = D-alanyl-D-alanine + ADP + phosphate + H(+). It participates in cell wall biogenesis; peptidoglycan biosynthesis. Its function is as follows. Cell wall formation. This Stutzerimonas stutzeri (strain A1501) (Pseudomonas stutzeri) protein is D-alanine--D-alanine ligase.